We begin with the raw amino-acid sequence, 520 residues long: Glutamate--cysteine ligase (520 aa).

The protein belongs to the glutamate--cysteine ligase type 1 family. Type 1 subfamily.

The enzyme catalyses L-cysteine + L-glutamate + ATP = gamma-L-glutamyl-L-cysteine + ADP + phosphate + H(+). The protein operates within sulfur metabolism; glutathione biosynthesis; glutathione from L-cysteine and L-glutamate: step 1/2. This chain is Glutamate--cysteine ligase, found in Leptospira interrogans serogroup Icterohaemorrhagiae serovar Lai (strain 56601).